A 526-amino-acid polypeptide reads, in one-letter code: ATP synthase subunit alpha (526 aa).

ATP is bound at residue 171-178; the sequence is GDRQTGKT.

Belongs to the ATPase alpha/beta chains family. In terms of assembly, F-type ATPases have 2 components, CF(1) - the catalytic core - and CF(0) - the membrane proton channel. CF(1) has five subunits: alpha(3), beta(3), gamma(1), delta(1), epsilon(1). CF(0) has four main subunits: a, b, b' and c.

The protein localises to the cell inner membrane. It carries out the reaction ATP + H2O + 4 H(+)(in) = ADP + phosphate + 5 H(+)(out). In terms of biological role, produces ATP from ADP in the presence of a proton gradient across the membrane. The alpha chain is a regulatory subunit. The polypeptide is ATP synthase subunit alpha (Chlorobium limicola (strain DSM 245 / NBRC 103803 / 6330)).